A 64-amino-acid polypeptide reads, in one-letter code: Alpha-toxin Amm5 (64 aa).

One can recognise an LCN-type CS-alpha/beta domain in the interval 2-64 (KDGYIIDDLN…VSIKEKGRCN (63 aa)). Disulfide bonds link Cys12–Cys63, Cys16–Cys36, Cys22–Cys46, and Cys26–Cys48. The residue at position 64 (Asn64) is an Asparagine amide.

In terms of tissue distribution, expressed by the venom gland.

It localises to the secreted. Its function is as follows. Alpha toxins bind voltage-independently at site-3 of sodium channels (Nav) and inhibit the inactivation of the activated channels, thereby blocking neuronal transmission. The chain is Alpha-toxin Amm5 from Androctonus mauritanicus mauritanicus (Scorpion).